The following is a 1158-amino-acid chain: Nuclear receptor-interacting protein 1 (1158 aa).

Residues 1–415 are interaction with ZNF366; sequence MTHGEELGSD…EESSTPTTID (415 aa). The short motif at 21 to 25 is the LXXLL motif 1 element; sequence LEGLL. Positions 33 to 56 are disordered; the sequence is SGTAVDKKSAGHNEEDQNFNISGS. The segment covering 37-47 has biased composition (basic and acidic residues); it reads VDKKSAGHNEE. A repression domain 1 region spans residues 78–333; sequence MLHLKKARLL…HLNGQARTSS (256 aa). Ser-104 bears the Phosphoserine mark. Lys-111 carries the post-translational modification N6-acetyllysine; alternate. A Glycyl lysine isopeptide (Lys-Gly) (interchain with G-Cter in SUMO2); alternate cross-link involves residue Lys-111. An LXXLL motif 2 motif is present at residues 133–137; that stretch reads LASLL. Lys-158 bears the N6-acetyllysine mark. A Glycyl lysine isopeptide (Lys-Gly) (interchain with G-Cter in SUMO2) cross-link involves residue Lys-170. An LXXLL motif 3 motif is present at residues 185 to 189; it reads LKTLL. Residues Lys-195 and Lys-198 each participate in a glycyl lysine isopeptide (Lys-Gly) (interchain with G-Cter in SUMO2) cross-link. Phosphothreonine is present on Thr-207. The residue at position 218 (Ser-218) is a Phosphoserine. Positions 266–270 match the LXXLL motif 4 motif; it reads LALLL. N6-acetyllysine is present on residues Lys-286 and Lys-310. Ser-356 carries the post-translational modification Phosphoserine. Lys-372 is covalently cross-linked (Glycyl lysine isopeptide (Lys-Gly) (interchain with G-Cter in SUMO2)). The residue at position 378 (Ser-378) is a Phosphoserine. Positions 380 to 384 match the LXXLL motif 5 motif; the sequence is LLHLL. Positions 393 to 435 are disordered; sequence MNGHSHSERGSIFEESSTPTTIDEYSDNNPSFTDDSSGDESSY. Residues 406–435 show a composition bias toward polar residues; it reads EESSTPTTIDEYSDNNPSFTDDSSGDESSY. Residues 410–700 are repression domain 2; sequence TPTTIDEYSD…PTGPEPGLSG (291 aa). A required for targeting to small nuclear foci region spans residues 431-472; sequence DESSYSNCVPIDLSCKHRTEKSESDQPVSLDNFTQSLLNTWD. A CTBP-binding; principal site motif is present at residues 440–446; it reads PIDLSCK. N6-acetyllysine occurs at positions 446 and 481. A Phosphoserine modification is found at Ser-487. The short motif at 500 to 504 is the LXXLL motif 6 element; sequence LLQLL. Lys-508 is covalently cross-linked (Glycyl lysine isopeptide (Lys-Gly) (interchain with G-Cter in SUMO2)). A Phosphoserine modification is found at Ser-518. An N6-acetyllysine modification is found at Lys-528. The disordered stretch occupies residues 540–563; it reads IESPSTNRTTPVSTPPLLTSSKAG. Phosphoserine is present on Ser-542. Positions 548–560 are enriched in low complexity; that stretch reads TTPVSTPPLLTSS. Position 564 is a phosphoserine (Ser-564). Short sequence motifs (CTBP-binding) lie at residues 565–569 and 599–603; these read PINLS and SMDLT. Disordered stretches follow at residues 592-622 and 641-663; these read TNTA…AQNS and SSMS…DKPI. Residues 601–610 are compositionally biased toward basic and acidic residues; the sequence is DLTKSKDPPG. Lys-606 carries the post-translational modification N6-acetyllysine. Positions 641–659 are enriched in polar residues; the sequence is SSMSVEEQRPSKQLLTGNT. Ser-671 bears the Phosphoserine mark. The LXXLL motif 7 motif lies at 713–717; the sequence is LQLLL. Residues 716 to 745 form a disordered region; the sequence is LLGNPNKGKSEKKEKTPLRDESTQEHSERA. The segment covering 723–745 has biased composition (basic and acidic residues); the sequence is GKSEKKEKTPLRDESTQEHSERA. Positions 735–885 are repression domain 3; the sequence is DESTQEHSER…NIVDAANNHS (151 aa). The interval 753-1158 is interaction with ZNF366; sequence VKIKSEPCDD…SVLTIKKESE (406 aa). Glycyl lysine isopeptide (Lys-Gly) (interchain with G-Cter in SUMO2) cross-links involve residues Lys-756 and Lys-802. Ser-807 carries the phosphoserine modification. The short motif at 819–823 is the LXXLL motif 8 element; that stretch reads LSRLL. Residues Lys-850 and Lys-901 each participate in a glycyl lysine isopeptide (Lys-Gly) (interchain with G-Cter in SUMO2) cross-link. Lys-931 is subject to N6-acetyllysine; alternate. A Glycyl lysine isopeptide (Lys-Gly) (interchain with G-Cter in SUMO2); alternate cross-link involves residue Lys-931. An LXXLL motif 9 motif is present at residues 936–940; it reads LKQLL. A CTBP-binding motif is present at residues 946–950; the sequence is VRDLS. Residues 950 to 974 form a disordered region; sequence SPHRSNSVADSKKKGHKNNVTNSKP. Ser-1001 is modified (phosphoserine). The short motif at 1061-1074 is the Ligand-dependent nuclear receptor binding element; that stretch reads LTKTNPILYYMLQK. Residues Lys-1105, Lys-1115, and Lys-1154 each participate in a glycyl lysine isopeptide (Lys-Gly) (interchain with G-Cter in SUMO2) cross-link. The interval 1118 to 1158 is repression domain 4; sequence FFNLRSPYNSHMGNNASRPHSANGEVYGLLGSVLTIKKESE.

In terms of assembly, interacts with RARA and RXRB homodimers and RARA/RXRB heterodimers in the presence of ligand. Interacts with HDAC1 and HDAC3 via its N-terminal domain. Interacts with NR2C1 (sumoylated form and via the ligand-binding domain); the interaction results in promoting the repressor activity of NR2C1. Interacts with CTBP1, CTBP2, ESR1, HDAC1, HDAC2, HDAC5, HDAC6, NR2C2, NR3C1, NR3C2, YWHAH, JUN and FOS. Found in a complex with both NR3C1 and YWHAH. Interacts with ZNF366. Interacts with RORA. Acetylation regulates its nuclear translocation and corepressive activity. Acetylation abolishes interaction with CTBP1. Phosphorylation enhances interaction with YWHAH.

It localises to the nucleus. Its function is as follows. Modulates transcriptional activation by steroid receptors such as NR3C1, NR3C2 and ESR1. Also modulates transcriptional repression by nuclear hormone receptors. Positive regulator of the circadian clock gene expression: stimulates transcription of BMAL1, CLOCK and CRY1 by acting as a coactivator for RORA and RORC. Involved in the regulation of ovarian function. Plays a role in renal development. The protein is Nuclear receptor-interacting protein 1 (NRIP1) of Homo sapiens (Human).